A 175-amino-acid chain; its full sequence is Adenine phosphoribosyltransferase (175 aa).

This sequence belongs to the purine/pyrimidine phosphoribosyltransferase family. In terms of assembly, homodimer.

It is found in the cytoplasm. The enzyme catalyses AMP + diphosphate = 5-phospho-alpha-D-ribose 1-diphosphate + adenine. The protein operates within purine metabolism; AMP biosynthesis via salvage pathway; AMP from adenine: step 1/1. Functionally, catalyzes a salvage reaction resulting in the formation of AMP, that is energically less costly than de novo synthesis. In Nitrosospira multiformis (strain ATCC 25196 / NCIMB 11849 / C 71), this protein is Adenine phosphoribosyltransferase.